We begin with the raw amino-acid sequence, 610 residues long: WD repeat-containing protein 46 (610 aa).

The interval 1–103 (METAPKPGKD…TQDPFPGPAP (103 aa)) is disordered. The segment covering 7-19 (PGKDVPPKKDKLQ) has biased composition (basic and acidic residues). S41 bears the Phosphoserine mark. The span at 65–77 (KKSRISKKPQVPK) shows a compositional bias: basic residues. WD repeat units follow at residues 193 to 234 (LRQF…CEIN), 235 to 272 (VMEA…LHCI), 274 to 312 (RCDR…IVAA), 315 to 354 (ARAG…PLAK), 357 to 396 (CHRG…QPLS), and 399 to 436 (TLPH…SPPS). The disordered stretch occupies residues 538–610 (ERLGYDPQAK…RPSALDRFVR (73 aa)). Residues 572-582 (VMDEEHRDKVR) are compositionally biased toward basic and acidic residues.

Part of the small subunit (SSU) processome, composed of more than 70 proteins and the RNA chaperone small nucleolar RNA (snoRNA) U3. Interacts with DDX21, NCL, NOP2 and EBNA1BP2.

It localises to the nucleus. Its subcellular location is the nucleolus. Its function is as follows. Scaffold component of the nucleolar structure. Required for localization of DDX21 and NCL to the granular compartment of the nucleolus. Part of the small subunit (SSU) processome, first precursor of the small eukaryotic ribosomal subunit. During the assembly of the SSU processome in the nucleolus, many ribosome biogenesis factors, an RNA chaperone and ribosomal proteins associate with the nascent pre-rRNA and work in concert to generate RNA folding, modifications, rearrangements and cleavage as well as targeted degradation of pre-ribosomal RNA by the RNA exosome. The sequence is that of WD repeat-containing protein 46 (WDR46) from Homo sapiens (Human).